Reading from the N-terminus, the 428-residue chain is uncharacterized protein (428 aa).

Disordered stretches follow at residues 1-25 (MRDN…PTRT), 157-219 (DTAK…TEQV), and 247-271 (DFGT…PWRP). The span at 12-22 (GSESQQTTYDP) shows a compositional bias: polar residues. A compositionally biased stretch (basic and acidic residues) spans 157–171 (DTAKSNEKLQGDESK). Residues 172-186 (SSNGSSSTSTTTQRG) are compositionally biased toward low complexity. A compositionally biased stretch (polar residues) spans 206-217 (GSQGNSGEQGTE).

It belongs to the adhesin P1 family.

This is an uncharacterized protein from Mycoplasma pneumoniae (strain ATCC 29342 / M129 / Subtype 1) (Mycoplasmoides pneumoniae).